The following is a 409-amino-acid chain: Phospholipase ABHD3 (409 aa).

A helical; Signal-anchor for type II membrane protein transmembrane segment spans residues 26-46 (GFFGSGVGLSLILGFSVAYAF). The region spanning 140-233 (PTILLLPGLT…MLLLNYLGKI (94 aa)) is the AB hydrolase-1 domain. Active-site charge relay system residues include Ser-220, Asp-346, and His-375.

The protein belongs to the AB hydrolase superfamily. AB hydrolase 4 family.

The protein localises to the membrane. The enzyme catalyses a 1,2-diacyl-sn-glycero-3-phosphocholine + H2O = a 1-acyl-sn-glycero-3-phosphocholine + a fatty acid + H(+). The catalysed reaction is a 1,2-diacyl-sn-glycero-3-phosphocholine + H2O = a 2-acyl-sn-glycero-3-phosphocholine + a fatty acid + H(+). It carries out the reaction 1-tetradecanoyl-2-(9Z,12Z-octadecadienoyl)-sn-glycero-3-phosphocholine + H2O = 2-(9Z,12Z-octadecadienoyl)-sn-glycero-3-phosphocholine + tetradecanoate + H(+). It catalyses the reaction 1-tetradecanoyl-2-(9Z,12Z-octadecadienoyl)-sn-glycero-3-phosphocholine + H2O = 1-tetradecanoyl-sn-glycero-3-phosphocholine + (9Z,12Z)-octadecadienoate + H(+). The enzyme catalyses 1-tetradecanoyl-2-(5Z,8Z,11Z,14Z-eicosatetraenoyl)-sn-glycero-3-phosphocholine + H2O = 2-(5Z,8Z,11Z,14Z)-eicosatetraenoyl-sn-glycero-3-phosphocholine + tetradecanoate + H(+). The catalysed reaction is 1-tetradecanoyl-2-(4Z,7Z,10Z,13Z,16Z,19Z-docosahexaenoyl)-sn-glycero-3-phosphocholine + H2O = 2-(4Z,7Z,10Z,13Z,16Z,19Z-docosahexaenoyl)-sn-glycero-3-phosphocholine + tetradecanoate + H(+). It carries out the reaction 1,2-ditetradecanoyl-sn-glycero-3-phosphocholine + H2O = 2-tetradecanoyl-sn-glycero-3-phosphocholine + tetradecanoate + H(+). It catalyses the reaction 1-octadecanoyl-2-acetyl-sn-glycero-3-phosphocholine + H2O = 1-octadecanoyl-sn-glycero-3-phosphocholine + acetate + H(+). The enzyme catalyses 1,2-ditetradecanoyl-sn-glycero-3-phosphocholine + H2O = 1-tetradecanoyl-sn-glycero-3-phosphocholine + tetradecanoate + H(+). The catalysed reaction is 1-octadecanoyl-2-pentanoyl-sn-glycero-3-phosphocholine + H2O = pentanoate + 1-octadecanoyl-sn-glycero-3-phosphocholine + H(+). It carries out the reaction 1-octadecanoyl-2-hexanoyl-sn-glycero-3-phosphocholine + H2O = hexanoate + 1-octadecanoyl-sn-glycero-3-phosphocholine + H(+). It catalyses the reaction 1-octadecanoyl-2-octanoyl-sn-glycero-3-phosphocholine + H2O = 1-octadecanoyl-sn-glycero-3-phosphocholine + octanoate + H(+). The enzyme catalyses 1-octadecanoyl-2-nonanoyl-sn-glycero-3-phosphocholine + H2O = nonanoate + 1-octadecanoyl-sn-glycero-3-phosphocholine + H(+). The catalysed reaction is 1-O-hexadecyl-2-nonadioyl-sn-glycero-3-phosphocholine + H2O = nonanedioate + 1-O-hexadecyl-sn-glycero-3-phosphocholine + H(+). It carries out the reaction 1-hexadecanoyl-2-nonadioyl-sn-glycero-3-phosphocholine + H2O = nonanedioate + 1-hexadecanoyl-sn-glycero-3-phosphocholine + H(+). It catalyses the reaction 1-hexadecanoyl-2-(9-oxononanoyl)-sn-glycero-3-phosphocholine + H2O = 9-oxononanoate + 1-hexadecanoyl-sn-glycero-3-phosphocholine + H(+). The enzyme catalyses 1-hexadecanoyl-2-(5-oxopentanoyl)-sn-glycero-3-phosphocholine + H2O = 5-oxopentanoate + 1-hexadecanoyl-sn-glycero-3-phosphocholine + H(+). The catalysed reaction is 1-hexadecanoyl-2-glutaroyl-sn-glycero-3-phosphocholine + H2O = glutarate + 1-hexadecanoyl-sn-glycero-3-phosphocholine + H(+). It carries out the reaction 1-O-hexadecyl-2-acetyl-sn-glycero-3-phosphocholine + H2O = 1-O-hexadecyl-sn-glycero-3-phosphocholine + acetate + H(+). Functionally, phospholipase that may play a role in phospholipids remodeling. May selectively cleave myristate (C14)-containing phosphatidylcholines through its predominant phospholipase 1 activity, cleaving preferentially acyl groups in sn1 position. In parallel, may have a minor phospholipase 2 activity acting on acyl groups in position sn2. In addition to (C14)-containing phosphatidylcholines, may also act on other medium-chain-containing and oxidatively truncated phospholipids. The chain is Phospholipase ABHD3 from Homo sapiens (Human).